We begin with the raw amino-acid sequence, 462 residues long: MDAMQKTIEYTSVSRIAGPLMVIDGIEGIAYGEIVDITTPNGDKRTGQVLEAREEIAVVQVFEGTSELNTSETKVRFTGDTAKIGVSYDMLGRIFNGAGKPLDGGPEIIAEKKLDINGYPLNPVSRNPPNAFVQTGISTIDGTNTLVRGQKIPIFSGSGLPHNKLATQIARQAKVRGEGEQFAVVFAAMGITGEESNYFMDEFKKTGALEKAVVFINLADDPAIERILTPRIALTTAEYLAYEKGMHVLVILTDLTNYCEALREIAAARNEVPGRRGYPGYMYTDLACLYERAGRVKGREGTVTQIPILTMPDDDITHPIPDLTGYITEGQIVLSRELNRKGIYPPVDILPSLSRLAGNGQGEGKTRDDHSKVISQAYAAYAEGRGLRDLVAVVGEEALTERDRSFLKFADAFENSIVTQGVDEDRSIEETLDYVWDLLTILPREELKRVSDELIEKYLPKK.

Belongs to the ATPase alpha/beta chains family. As to quaternary structure, has multiple subunits with at least A(3), B(3), C, D, E, F, H, I and proteolipid K(x).

The protein resides in the cell membrane. Its function is as follows. Component of the A-type ATP synthase that produces ATP from ADP in the presence of a proton gradient across the membrane. The B chain is a regulatory subunit. The protein is A-type ATP synthase subunit B of Methanococcus maripaludis (strain C7 / ATCC BAA-1331).